We begin with the raw amino-acid sequence, 331 residues long: DSC E3 ubiquitin ligase complex subunit D (331 aa).

N-linked (GlcNAc...) asparagine glycosylation occurs at Asn-26. Helical transmembrane passes span Ile-63–Ala-83, Pro-107–Thr-127, and Leu-159–Glu-179. A compositionally biased stretch (basic and acidic residues) spans Val-197 to Ser-214. Residues Val-197–Glu-225 form a disordered region.

In terms of assembly, component of the DSC E3 ubiquitin ligase complex composed of dscA, dscB, dscC and dscD.

The protein localises to the endoplasmic reticulum membrane. It participates in protein modification; protein ubiquitination. Component of the DSC E3 ubiquitin ligase complex which is required for the srbA transcriptional activator proteolytic cleavage to release the soluble transcription factor from the membrane in low oxygen or sterol conditions. Required for growth during hypoxia and triazole drug susceptibility, as well as for virulence in a murine model of invasive pulmonary aspergillosis (IPA). The polypeptide is DSC E3 ubiquitin ligase complex subunit D (Aspergillus fumigatus (strain CBS 144.89 / FGSC A1163 / CEA10) (Neosartorya fumigata)).